A 1097-amino-acid chain; its full sequence is DNA-directed RNA polymerase subunit beta (1097 aa).

A disordered region spans residues glutamine 1072–aspartate 1097. Positions arginine 1077–threonine 1091 are enriched in polar residues.

This sequence belongs to the RNA polymerase beta chain family. In terms of assembly, in cyanobacteria the RNAP catalytic core is composed of 2 alpha, 1 beta, 1 beta', 1 gamma and 1 omega subunit. When a sigma factor is associated with the core the holoenzyme is formed, which can initiate transcription.

The catalysed reaction is RNA(n) + a ribonucleoside 5'-triphosphate = RNA(n+1) + diphosphate. Its function is as follows. DNA-dependent RNA polymerase catalyzes the transcription of DNA into RNA using the four ribonucleoside triphosphates as substrates. The sequence is that of DNA-directed RNA polymerase subunit beta from Prochlorococcus marinus (strain MIT 9301).